The chain runs to 116 residues: Large ribosomal subunit protein uL18 (116 aa).

Belongs to the universal ribosomal protein uL18 family. As to quaternary structure, part of the 50S ribosomal subunit; part of the 5S rRNA/L5/L18/L25 subcomplex. Contacts the 5S and 23S rRNAs.

Its function is as follows. This is one of the proteins that bind and probably mediate the attachment of the 5S RNA into the large ribosomal subunit, where it forms part of the central protuberance. The chain is Large ribosomal subunit protein uL18 from Shewanella piezotolerans (strain WP3 / JCM 13877).